Here is a 118-residue protein sequence, read N- to C-terminus: Small ribosomal subunit protein uS13 (118 aa).

Positions 91-118 are disordered; sequence HRRGLPVRGQRTKTNARTRKGPRKPIKK.

The protein belongs to the universal ribosomal protein uS13 family. Part of the 30S ribosomal subunit. Forms a loose heterodimer with protein S19. Forms two bridges to the 50S subunit in the 70S ribosome.

Located at the top of the head of the 30S subunit, it contacts several helices of the 16S rRNA. In the 70S ribosome it contacts the 23S rRNA (bridge B1a) and protein L5 of the 50S subunit (bridge B1b), connecting the 2 subunits; these bridges are implicated in subunit movement. Contacts the tRNAs in the A and P-sites. The chain is Small ribosomal subunit protein uS13 from Hamiltonella defensa subsp. Acyrthosiphon pisum (strain 5AT).